Consider the following 142-residue polypeptide: MSGRGKTGGKARAKAKTRSSRAGLQFPVGRVHRLLRKGNYAERVGAGAPVYLAAVLEYLTAEILELAGNAARDNKKTRIIPRHLQLAVRNDEELNKLLGGVTIAQGGVLPNIQAVLLPKKTGQAAASSGKSGKKGSSQSQEY.

The segment at Met-1–Ala-22 is disordered. Ser-2 carries the N-acetylserine modification. Ser-2 carries the post-translational modification Phosphoserine. Basic residues predominate over residues Thr-7–Ser-19. Lys-10 bears the N6-lactoyllysine; alternate mark. Glycyl lysine isopeptide (Lys-Gly) (interchain with G-Cter in ubiquitin) cross-links involve residues Lys-14, Lys-16, and Lys-120. The interval Gln-123–Tyr-142 is disordered. A Phosphoserine modification is found at Ser-139. The [ST]-Q motif signature appears at Ser-139–Gln-140. Tyr-142 is subject to Phosphotyrosine; by WSTF.

The protein belongs to the histone H2A family. In terms of assembly, the nucleosome is a histone octamer containing two molecules each of H2A, H2B, H3 and H4 assembled in one H3-H4 heterotetramer and two H2A-H2B heterodimers. The octamer wraps approximately 147 bp of DNA. Interacts with numerous proteins required for DNA damage signaling and repair when phosphorylated on Ser-139. In terms of processing, phosphorylated. Phosphorylation of Ser-139 (H2AX139ph) occurs in response to DNA double strand breaks (DSBs) generated by exogenous genotoxic agents, by stalled replication forks and by meiotic recombination events. Phosphorylation is dependent on the DNA damage checkpoint kinases ATR and ATM, spreads on either side of a detected DSB site and may mark the surrounding chromatin for recruitment of proteins required for DNA damage signaling and repair. Widespread phosphorylation may also serve to amplify the damage signal or aid repair of persistent lesions. Dephosphorylation of Ser-139 is required for DNA DSB repair. Phosphorylation at Tyr-142 (H2AXY142ph) by baz1b/wstf determines the relative recruitment of either DNA repair or pro-apoptotic factors. Phosphorylation at Tyr-142 (H2AXY142ph) favors the recruitment of pro-apoptosis factors. In contrast, dephosphorylation of Tyr-142 by EYA proteins (eya1, eya2, eya3 or eya4) favors the recruitment of MDC1-containing DNA repair complexes to the tail of phosphorylated Ser-139 (H2AX139ph). Phosphorylated by VRK1. Monoubiquitination of Lys-120 (H2AXK119ub) by ring1 and rnf2/ring2 complex gives a specific tag for epigenetic transcriptional repression. Following DNA double-strand breaks (DSBs), it is ubiquitinated through 'Lys-63' linkage of ubiquitin moieties by the E2 ligase ube2n and the E3 ligases rnf8 and rnf168, leading to the recruitment of repair proteins to sites of DNA damage. Ubiquitination at Lys-14 and Lys-16 (H2AK13Ub and H2AK15Ub, respectively) in response to DNA damage is initiated by rnf168 that mediates monoubiquitination at these 2 sites, and 'Lys-63'-linked ubiquitin are then conjugated to monoubiquitin; rnf8 is able to extend 'Lys-63'-linked ubiquitin chains in vitro. H2AK119Ub and ionizing radiation-induced 'Lys-63'-linked ubiquitination (H2AK13Ub and H2AK15Ub) are distinct events.

The protein resides in the nucleus. The protein localises to the chromosome. In terms of biological role, variant histone H2A which replaces conventional H2A in a subset of nucleosomes. Nucleosomes wrap and compact DNA into chromatin, limiting DNA accessibility to the cellular machineries which require DNA as a template. Histones thereby play a central role in transcription regulation, DNA repair, DNA replication and chromosomal stability. DNA accessibility is regulated via a complex set of post-translational modifications of histones, also called histone code, and nucleosome remodeling. Required for checkpoint-mediated arrest of cell cycle progression in response to low doses of ionizing radiation and for efficient repair of DNA double strand breaks (DSBs) specifically when modified by C-terminal phosphorylation. In Danio rerio (Zebrafish), this protein is Histone H2AX (h2ax).